A 272-amino-acid polypeptide reads, in one-letter code: NH(3)-dependent NAD(+) synthetase (272 aa).

ATP is bound at residue 43-50 (GLSGGQDS). Residue Asp-49 coordinates Mg(2+). Arg-138 lines the deamido-NAD(+) pocket. Thr-158 provides a ligand contact to ATP. Glu-163 is a Mg(2+) binding site. Residues Lys-171 and Asp-178 each coordinate deamido-NAD(+). Residues Lys-187 and Thr-209 each coordinate ATP. Residue 258–259 (HK) coordinates deamido-NAD(+).

Belongs to the NAD synthetase family. As to quaternary structure, homodimer.

The catalysed reaction is deamido-NAD(+) + NH4(+) + ATP = AMP + diphosphate + NAD(+) + H(+). Its pathway is cofactor biosynthesis; NAD(+) biosynthesis; NAD(+) from deamido-NAD(+) (ammonia route): step 1/1. In terms of biological role, catalyzes the ATP-dependent amidation of deamido-NAD to form NAD. Uses ammonia as a nitrogen source. The sequence is that of NH(3)-dependent NAD(+) synthetase from Halalkalibacterium halodurans (strain ATCC BAA-125 / DSM 18197 / FERM 7344 / JCM 9153 / C-125) (Bacillus halodurans).